The primary structure comprises 357 residues: Chorismate synthase (357 aa).

Arginine 48 is a binding site for NADP(+). FMN is bound by residues 125–127 (RSS), 238–239 (NA), glycine 282, 297–301 (KPTSS), and arginine 323.

Belongs to the chorismate synthase family. Homotetramer. It depends on FMNH2 as a cofactor.

The catalysed reaction is 5-O-(1-carboxyvinyl)-3-phosphoshikimate = chorismate + phosphate. It functions in the pathway metabolic intermediate biosynthesis; chorismate biosynthesis; chorismate from D-erythrose 4-phosphate and phosphoenolpyruvate: step 7/7. In terms of biological role, catalyzes the anti-1,4-elimination of the C-3 phosphate and the C-6 proR hydrogen from 5-enolpyruvylshikimate-3-phosphate (EPSP) to yield chorismate, which is the branch point compound that serves as the starting substrate for the three terminal pathways of aromatic amino acid biosynthesis. This reaction introduces a second double bond into the aromatic ring system. In Gluconacetobacter diazotrophicus (strain ATCC 49037 / DSM 5601 / CCUG 37298 / CIP 103539 / LMG 7603 / PAl5), this protein is Chorismate synthase.